We begin with the raw amino-acid sequence, 330 residues long: 4-hydroxythreonine-4-phosphate dehydrogenase (330 aa).

His-136 and Thr-137 together coordinate substrate. Residues His-166, His-211, and His-266 each coordinate a divalent metal cation. Substrate-binding residues include Lys-274, Asn-283, and Arg-292.

Belongs to the PdxA family. In terms of assembly, homodimer. It depends on Zn(2+) as a cofactor. Mg(2+) serves as cofactor. The cofactor is Co(2+).

The protein localises to the cytoplasm. It carries out the reaction 4-(phosphooxy)-L-threonine + NAD(+) = 3-amino-2-oxopropyl phosphate + CO2 + NADH. The protein operates within cofactor biosynthesis; pyridoxine 5'-phosphate biosynthesis; pyridoxine 5'-phosphate from D-erythrose 4-phosphate: step 4/5. Functionally, catalyzes the NAD(P)-dependent oxidation of 4-(phosphooxy)-L-threonine (HTP) into 2-amino-3-oxo-4-(phosphooxy)butyric acid which spontaneously decarboxylates to form 3-amino-2-oxopropyl phosphate (AHAP). This Serratia proteamaculans (strain 568) protein is 4-hydroxythreonine-4-phosphate dehydrogenase.